The following is a 211-amino-acid chain: Glutathione S-transferase class-mu 28 kDa isozyme (211 aa).

The region spanning 4-86 (DHIKVIYFNG…YMAKKHHMMG (83 aa)) is the GST N-terminal domain. Residues tyrosine 10, arginine 16, tryptophan 41, lysine 45, leucine 53, glutamate 70, serine 71, and aspartate 104 each coordinate glutathione. One can recognise a GST C-terminal domain in the interval 88 to 211 (TEEEYYNVEK…YLSDRAATPF (124 aa)).

Belongs to the GST superfamily. Mu family. Homodimer.

It carries out the reaction RX + glutathione = an S-substituted glutathione + a halide anion + H(+). Its function is as follows. Conjugation of reduced glutathione to a wide number of exogenous and endogenous hydrophobic electrophiles. Functionally, GST isoenzymes appear to play a central role in the parasite detoxification system. Other functions are also suspected including a role in increasing the solubility of haematin in the parasite gut. The polypeptide is Glutathione S-transferase class-mu 28 kDa isozyme (Schistosoma haematobium (Blood fluke)).